Consider the following 220-residue polypeptide: Cysteine-rich venom protein (220 aa).

In terms of domain architecture, SCP spans aspartate 20 to tyrosine 147. Cystine bridges form between cysteine 56-cysteine 134, cysteine 73-cysteine 148, cysteine 129-cysteine 145, cysteine 167-cysteine 174, cysteine 170-cysteine 179, cysteine 183-cysteine 215, cysteine 192-cysteine 209, and cysteine 200-cysteine 213. One can recognise a ShKT domain in the interval cysteine 183 to cysteine 215.

As to expression, expressed by the venom gland.

The protein localises to the secreted. Its function is as follows. Blocks contraction of smooth muscle elicited by high potassium-induced depolarization, but does not block caffeine-stimulated contraction. May target voltage-gated calcium channels in smooth muscle. The chain is Cysteine-rich venom protein from Echis coloratus (Carpet viper).